Reading from the N-terminus, the 547-residue chain is Carboxypeptidase N subunit 2 (547 aa).

Positions 1-21 are cleaved as a signal peptide; that stretch reads MFPGAWLCWVSLLLLARLTQP. The LRRNT domain maps to 22–49; the sequence is CPVGCDCFGREVFCSDEQLADIPPDIPP. N-linked (GlcNAc...) asparagine glycosylation is found at asparagine 74, asparagine 111, and asparagine 119. LRR repeat units follow at residues 98–119, 122–143, 146–167, 170–191, 194–215, 218–239, 242–263, 266–287, 290–311, 314–335, 338–359, and 362–383; these read RLQD…IFSN, SLEK…LFCH, ILES…LFQS, DLRT…AFQS, GLQM…ALGS, SLQE…LFSQ, SLEM…LFSS, NLTF…LFAH, GLLH…AFTN, RLVS…VFRN, QLVK…LFHN, and RLQL…IFDT. Asparagine 266 and asparagine 311 each carry an N-linked (GlcNAc...) asparagine glycan. N-linked (GlcNAc...) asparagine glycosylation is found at asparagine 348, asparagine 359, and asparagine 367. One can recognise an LRRCT domain in the interval 395 to 447; it reads NPWQCDCHLSYLTSWLRLYNNQISNTHTFCAGPAYLKGQLVPNLKQEQLICPV. Asparagine 520 carries an N-linked (GlcNAc...) asparagine glycan.

Tetramer of two catalytic chains and two glycosylated inactive chains.

The protein localises to the secreted. Functionally, the 83 kDa subunit binds and stabilizes the catalytic subunit at 37 degrees Celsius and keeps it in circulation. Under some circumstances it may be an allosteric modifier of the catalytic subunit. The sequence is that of Carboxypeptidase N subunit 2 (Cpn2) from Mus musculus (Mouse).